Reading from the N-terminus, the 258-residue chain is 5-oxoprolinase subunit A (258 aa).

The protein belongs to the LamB/PxpA family. Forms a complex composed of PxpA, PxpB and PxpC.

The catalysed reaction is 5-oxo-L-proline + ATP + 2 H2O = L-glutamate + ADP + phosphate + H(+). Its function is as follows. Catalyzes the cleavage of 5-oxoproline to form L-glutamate coupled to the hydrolysis of ATP to ADP and inorganic phosphate. The sequence is that of 5-oxoprolinase subunit A from Deinococcus radiodurans (strain ATCC 13939 / DSM 20539 / JCM 16871 / CCUG 27074 / LMG 4051 / NBRC 15346 / NCIMB 9279 / VKM B-1422 / R1).